The primary structure comprises 423 residues: MINIEDISKSSNESEEKQLKSTSTSSKPKYPFAAKSLFKGSNNIIPYYLSTSNTFQCVASESIQTWLLSDDGHIFTSSGNFVLDVSSGGYFVELVQLNSNSKTQIWTIDTTNNKIQNQGNGKYLDIDNLNICVAPLNGNATQKWTTFRRAPIPTGNWGYFQSKKLDSNNNYWGLSVLNNSTSYNTSVVMNKVQAKSIGQIWQMTNDGHILSRLDGNLVLDIGPSINGSKTNYYLNTNVYKANDLMQQWGINENNQIFNQYYPNLCIGFVGELGVDSTVNCVLAQPTSASDINFQWIANPTYSLNQIVSEVPEPFPAYTSGDLLASYQYLSNDATNGYTDDIRSLYTSINVSLEHFYVNVSNATCPSSIHSTEDFSNVQNQIKNELTYAINVRLVFDNYSDFYSKLFSQGSTNLTNLANLINVI.

Basic and acidic residues predominate over residues 1 to 19; sequence MINIEDISKSSNESEEKQL. A disordered region spans residues 1–27; that stretch reads MINIEDISKSSNESEEKQLKSTSTSSK. 2 consecutive Ricin B-type lectin domains span residues 27–147 and 118–251; these read KPKY…WTTF and QGNG…WGIN.

Belongs to the cup family.

The protein resides in the cytoplasm. The protein localises to the membrane. May play an important role in stabilizing and/or regulating the cell membrane during Ca(2+) stress or certain stages of development. The polypeptide is Calcium up-regulated protein A (cupA) (Dictyostelium discoideum (Social amoeba)).